The chain runs to 457 residues: Serine/threonine-protein phosphatase 2A activator 2 (457 aa).

Disordered regions lie at residues 387 to 407 (DAHGHIHPAGKPHAHGTGEGQ) and 426 to 457 (AEQEKKRQQGNFSSTMLGEKPFGTGVRRIPFD). Residues 391–400 (HIHPAGKPHA) are compositionally biased toward basic residues.

The protein belongs to the PTPA-type PPIase family.

The protein localises to the cytoplasm. It carries out the reaction [protein]-peptidylproline (omega=180) = [protein]-peptidylproline (omega=0). Its function is as follows. PPIases accelerate the folding of proteins. It catalyzes the cis-trans isomerization of proline imidic peptide bonds in oligopeptides. Acts as a regulatory subunit for PP2A-like phosphatases modulating their activity or substrate specificity, probably by inducing a conformational change in the catalytic subunit, a direct target of the PPIase. Can reactivate inactive phosphatase PP2A-phosphatase methylesterase complexes (PP2Ai) in presence of ATP and Mg(2+) by dissociating the inactive form from the complex. The polypeptide is Serine/threonine-protein phosphatase 2A activator 2 (RRD2) (Mycosarcoma maydis (Corn smut fungus)).